A 349-amino-acid chain; its full sequence is Small ribosomal subunit protein uS2 (349 aa).

Belongs to the universal ribosomal protein uS2 family.

In Methylocella silvestris (strain DSM 15510 / CIP 108128 / LMG 27833 / NCIMB 13906 / BL2), this protein is Small ribosomal subunit protein uS2.